A 251-amino-acid polypeptide reads, in one-letter code: Lactose phosphotransferase system repressor (251 aa).

The HTH deoR-type domain occupies 3-58 (KHERLDEIAKLVNKKGTIRTNEIVEGLNVSDMTVRRDLIELENKGILTKIHGGARS). The segment at residues 20-39 (IRTNEIVEGLNVSDMTVRRD) is a DNA-binding region (H-T-H motif).

In terms of biological role, repressor of the lactose catabolism operon. Galactose-6-phosphate is the inducer. This is Lactose phosphotransferase system repressor (lacR) from Staphylococcus aureus (strain NCTC 8325 / PS 47).